We begin with the raw amino-acid sequence, 576 residues long: Lysine--tRNA ligase (576 aa).

Mg(2+)-binding residues include Glu412 and Glu419.

Belongs to the class-II aminoacyl-tRNA synthetase family. Homodimer. Requires Mg(2+) as cofactor.

The protein resides in the cytoplasm. The catalysed reaction is tRNA(Lys) + L-lysine + ATP = L-lysyl-tRNA(Lys) + AMP + diphosphate. The chain is Lysine--tRNA ligase from Parabacteroides distasonis (strain ATCC 8503 / DSM 20701 / CIP 104284 / JCM 5825 / NCTC 11152).